Reading from the N-terminus, the 351-residue chain is Nicotinate-nucleotide--dimethylbenzimidazole phosphoribosyltransferase (351 aa).

The Proton acceptor role is filled by E317.

It belongs to the CobT family.

It catalyses the reaction 5,6-dimethylbenzimidazole + nicotinate beta-D-ribonucleotide = alpha-ribazole 5'-phosphate + nicotinate + H(+). It functions in the pathway nucleoside biosynthesis; alpha-ribazole biosynthesis; alpha-ribazole from 5,6-dimethylbenzimidazole: step 1/2. Its function is as follows. Catalyzes the synthesis of alpha-ribazole-5'-phosphate from nicotinate mononucleotide (NAMN) and 5,6-dimethylbenzimidazole (DMB). This Pseudomonas aeruginosa (strain LESB58) protein is Nicotinate-nucleotide--dimethylbenzimidazole phosphoribosyltransferase.